Here is a 340-residue protein sequence, read N- to C-terminus: GATA transcription factor 20 (340 aa).

The interval 1–88 is disordered; sequence MSHHDGSKPY…MEEDEDAQHH (88 aa). Over residues 25–47 the composition is skewed to low complexity; the sequence is ADDAAAHVAPTVDHLAAVAAEAE. Over residues 48-60 the composition is skewed to basic and acidic residues; it reads AMARFEEEHRALG. Over residues 61-84 the composition is skewed to acidic residues; the sequence is AEEEYEEEEDELEEEEEEMEEDED. The region spanning 121 to 156 is the Tify domain; that stretch reads QPMASNQLTLSFQGEVYVFDSVSPDKVQAVLLLLGG. The 43-residue stretch at 182–224 folds into the CCT domain; that stretch reads RVASLMRFREKRKERNFDKKIRYSVRKEVALRMQRNRGQFTSS. The tract at residues 215–253 is disordered; sequence QRNRGQFTSSKPKGDEATSELTASDGSPNWGSVEGRPPS. A compositionally biased stretch (polar residues) spans 233-244; that stretch reads SELTASDGSPNW. The GATA-type zinc finger occupies 257–284; the sequence is CHHCGINAKATPMMRRGPDGPRTLCNAC. A compositionally biased stretch (polar residues) spans 313–325; sequence DGNGSAAAPTTEQ. The interval 313-340 is disordered; sequence DGNGSAAAPTTEQEIPAPATVNGHESST.

Belongs to the type IV zinc-finger family. Class C subfamily.

It is found in the nucleus. Functionally, transcriptional activator that specifically binds 5'-GATA-3' or 5'-GAT-3' motifs within gene promoters. This Oryza sativa subsp. japonica (Rice) protein is GATA transcription factor 20.